Here is a 980-residue protein sequence, read N- to C-terminus: MALAVLRVLDPFPAETPPLAVLLPPGGPWPATGLGLVLALRPASESPAGPALLVAALEGPGSQNGQRGPGPPQLLVSRALLRLLALGPGARVRARPVRRPPALGWALLGSAPGPGPGPRVGPLLVRRGESLPVPGSRVLETRPALQGLLGPGTRLAVTELRGRAKLGPESTQHSRLPPPPVASSFAVSHAVRQLKGVLGGTGDALGVTRSCLRGLGLFQGEWVWVARVGEFPNTSQPHLAKVQLLEPRWDLSERLGPSSGQLGEPLADGLVFVPATLAFNLGCDPLEVGELRIQRYLEGSIIPEDRGSCSLMSGPPFARELHIEIVSSPHYSANGDYDHVLYRHFHTPRVVQEGDVLCVPTVGQVEILEGSPEKLPRWREVFFKVKKAVGEAPDGPASAFLADTTHTSLYMAGSALSRVPLLPSGRSTPWDSLSPPGLEALVNELCAILKPHLQPGGTLLTGTSCVLLQGPPGSGKTTAVTAACSRLGLHLLKVPCYSLCADSSGAVETKLQAAFSRARRCRPAVLLLTAIDLLGRDRDGLDEDARVVATLRHLLLDEDPVSNCPPLMVVATTSRAQDLPTDVHTAFPHELEVPVLSEEQRLSVLQALTAHLPLGQEVNLLQLARRCAGFVVGDLYALLTHTSRVACARIRASGLAGGLSEEDEGELCAAGFPLLAEDFGQALDQLQTAHSQAVGAPKIPSVSWHDVGGLQDVKKEILETIQLPLEHPELLSLGLRRSGLLLHGPPGTGKTLLAKAVATECSLTFLSVKGPELINMYVGQSEENVREVFARARAAAPCIIFFDELDSLAPSRGRSGDSGGVMDRVVSQLLAELDGLHSTQDVFVIGATNRPDLLDPALLRPGRFDKLVFVGASEDRASQLRVLSAITRKFKLEASVSLVNVLDRCPPQLTGADLYSLCSDAMTTALKRRVRDLEEGLEMGSSALLLTMEDLLQAAARLQPSVSEQELLRYKRIQRKFAAC.

Arg-119 carries the omega-N-methylarginine modification. Residues 470–477 and 744–751 contribute to the ATP site; these read GPPGSGKT and GPPGTGKT.

It belongs to the AAA ATPase family. Interacts with PEX1; forming the PEX1-PEX6 AAA ATPase complex, which is composed of a heterohexamer formed by a trimer of PEX1-PEX6 dimers. Interacts with PEX26; interaction is direct and promotes recruitment to peroxisomal membranes. Interacts with ZFAND6.

The protein localises to the cytoplasm. Its subcellular location is the cytosol. It is found in the peroxisome membrane. The protein resides in the cell projection. It localises to the cilium. The protein localises to the photoreceptor outer segment. It catalyses the reaction ATP + H2O = ADP + phosphate + H(+). In terms of biological role, component of the PEX1-PEX6 AAA ATPase complex, a protein dislocase complex that mediates the ATP-dependent extraction of the PEX5 receptor from peroxisomal membranes, an essential step for PEX5 recycling. Specifically recognizes PEX5 monoubiquitinated at 'Cys-11', and pulls it out of the peroxisome lumen through the PEX2-PEX10-PEX12 retrotranslocation channel. Extraction by the PEX1-PEX6 AAA ATPase complex is accompanied by unfolding of the TPR repeats and release of bound cargo from PEX5. The protein is Peroxisomal ATPase PEX6 of Cricetulus griseus (Chinese hamster).